A 323-amino-acid chain; its full sequence is Beta-ketoacyl-[acyl-carrier-protein] synthase III (323 aa).

Active-site residues include cysteine 113 and histidine 250. The tract at residues 251–255 (QANRR) is ACP-binding. Asparagine 280 is a catalytic residue.

Belongs to the thiolase-like superfamily. FabH family. As to quaternary structure, homodimer.

It localises to the cytoplasm. The enzyme catalyses malonyl-[ACP] + acetyl-CoA + H(+) = 3-oxobutanoyl-[ACP] + CO2 + CoA. The protein operates within lipid metabolism; fatty acid biosynthesis. Its function is as follows. Catalyzes the condensation reaction of fatty acid synthesis by the addition to an acyl acceptor of two carbons from malonyl-ACP. Catalyzes the first condensation reaction which initiates fatty acid synthesis and may therefore play a role in governing the total rate of fatty acid production. Possesses both acetoacetyl-ACP synthase and acetyl transacylase activities. Its substrate specificity determines the biosynthesis of branched-chain and/or straight-chain of fatty acids. In Rhizobium johnstonii (strain DSM 114642 / LMG 32736 / 3841) (Rhizobium leguminosarum bv. viciae), this protein is Beta-ketoacyl-[acyl-carrier-protein] synthase III.